The chain runs to 422 residues: Histidine--tRNA ligase (422 aa).

Belongs to the class-II aminoacyl-tRNA synthetase family. In terms of assembly, homodimer.

The protein resides in the cytoplasm. The catalysed reaction is tRNA(His) + L-histidine + ATP = L-histidyl-tRNA(His) + AMP + diphosphate + H(+). This is Histidine--tRNA ligase from Alcanivorax borkumensis (strain ATCC 700651 / DSM 11573 / NCIMB 13689 / SK2).